Here is a 663-residue protein sequence, read N- to C-terminus: DNA ligase (663 aa).

NAD(+)-binding positions include 31–35 (DYEYD), 80–81 (SL), and E109. Catalysis depends on K111, which acts as the N6-AMP-lysine intermediate. NAD(+) is bound by residues R132, E167, K283, and K307. Zn(2+) is bound by residues C401, C404, C419, and C424. Positions 586 to 663 (KIDNRFLGKT…TEEDLKDMIK (78 aa)) constitute a BRCT domain.

This sequence belongs to the NAD-dependent DNA ligase family. LigA subfamily. It depends on Mg(2+) as a cofactor. The cofactor is Mn(2+).

The enzyme catalyses NAD(+) + (deoxyribonucleotide)n-3'-hydroxyl + 5'-phospho-(deoxyribonucleotide)m = (deoxyribonucleotide)n+m + AMP + beta-nicotinamide D-nucleotide.. Its function is as follows. DNA ligase that catalyzes the formation of phosphodiester linkages between 5'-phosphoryl and 3'-hydroxyl groups in double-stranded DNA using NAD as a coenzyme and as the energy source for the reaction. It is essential for DNA replication and repair of damaged DNA. This Clostridium kluyveri (strain NBRC 12016) protein is DNA ligase.